The sequence spans 240 residues: Sulfite dehydrogenase subunit B (240 aa).

3 4Fe-4S ferredoxin-type domains span residues 4-34 (LALV…WAGP), 64-95 (TETV…KRPD), and 97-126 (GVVL…LDAQ). [4Fe-4S] cluster contacts are provided by C13, C16, C19, C23, C73, C76, C81, C85, C106, C109, C112, and C116.

In terms of assembly, forms a heterotrimeric membrane-bound complex composed of a catalytic heterodimer (SoeAB) and a membrane anchor protein (SoeC). Requires [4Fe-4S] cluster as cofactor.

It localises to the cell inner membrane. Functionally, part of the SoeABC complex that catalyzes the oxidation of sulfite to sulfate. SoeB is probably the electron transfer subunit. In Allochromatium vinosum (strain ATCC 17899 / DSM 180 / NBRC 103801 / NCIMB 10441 / D) (Chromatium vinosum), this protein is Sulfite dehydrogenase subunit B.